A 623-amino-acid chain; its full sequence is Chaperone protein HtpG (623 aa).

Residues 1–341 are a; substrate-binding; it reads MEKREFKAES…SQDLSLNISR (341 aa). The b stretch occupies residues 342–549; it reads EMLQHDRQLS…EGEVSIEMEK (208 aa). The tract at residues 550–623 is c; it reads ILSAMPNNQG…FTNDICKLMK (74 aa).

The protein belongs to the heat shock protein 90 family. In terms of assembly, homodimer.

The protein localises to the cytoplasm. Molecular chaperone. Has ATPase activity. The chain is Chaperone protein HtpG from Clostridium perfringens (strain ATCC 13124 / DSM 756 / JCM 1290 / NCIMB 6125 / NCTC 8237 / Type A).